We begin with the raw amino-acid sequence, 364 residues long: Guanine nucleotide-binding protein alpha-6 subunit (364 aa).

Positions 1-29 (MGAGATGLRGARLSPEERANSSKSRAIDR) are disordered. A lipid anchor (N-myristoyl glycine) is attached at glycine 2. Residues 14–29 (SPEERANSSKSRAIDR) show a composition bias toward basic and acidic residues. Residues 40-363 (NRFKILLLGT…NENLRSAGLH (324 aa)) form the G-alpha domain. Residues 43 to 56 (KILLLGTAESGKST) are G1 motif. GTP-binding positions include 48–55 (GTAESGKS), 186–192 (VHCRIST), 211–215 (DVGGQ), 280–283 (NKYD), and alanine 335. Residues serine 55 and threonine 192 each coordinate Mg(2+). Residues 184 to 192 (DIVHCRIST) form a G2 motif region. The G3 motif stretch occupies residues 207 to 216 (FKMVDVGGQR). Residues 276–283 (VLFLNKYD) are G4 motif. The tract at residues 333 to 338 (TTATDT) is G5 motif.

Belongs to the G-alpha family. In terms of assembly, g proteins are composed of 3 units; alpha, beta and gamma. The alpha chain contains the guanine nucleotide binding site.

Functionally, guanine nucleotide-binding proteins (G proteins) are involved as modulators or transducers in various transmembrane signaling systems. The polypeptide is Guanine nucleotide-binding protein alpha-6 subunit (gpa-6) (Caenorhabditis elegans).